Consider the following 139-residue polypeptide: D-ribose pyranase (139 aa).

The active-site Proton donor is the H20. Residues D28, H106, and 128–130 each bind substrate; that span reads YAN.

It belongs to the RbsD / FucU family. RbsD subfamily. Homodecamer.

Its subcellular location is the cytoplasm. The catalysed reaction is beta-D-ribopyranose = beta-D-ribofuranose. The protein operates within carbohydrate metabolism; D-ribose degradation; D-ribose 5-phosphate from beta-D-ribopyranose: step 1/2. In terms of biological role, catalyzes the interconversion of beta-pyran and beta-furan forms of D-ribose. In Escherichia coli O6:H1 (strain CFT073 / ATCC 700928 / UPEC), this protein is D-ribose pyranase.